The sequence spans 555 residues: Probable terpene synthase 6 (555 aa).

Mg(2+)-binding residues include Asp-309, Asp-313, and Glu-460. The short motif at 309–313 (DDTYD) is the DDXXD motif element.

This sequence belongs to the terpene synthase family. Mg(2+) is required as a cofactor.

Probable sesquiterpene synthase. The chain is Probable terpene synthase 6 (TPS6) from Ricinus communis (Castor bean).